Here is a 1118-residue protein sequence, read N- to C-terminus: cGMP-specific 3',5'-cyclic phosphodiesterase (1118 aa).

The disordered stretch occupies residues 1 to 142; that stretch reads MTDVSSPAGG…KASTTASQQD (142 aa). The segment covering 18–33 has biased composition (low complexity); the sequence is STTSSSSAATTSASSS. Positions 34–45 are enriched in polar residues; that stretch reads KPLTNGANKTAI. 2 stretches are compositionally biased toward low complexity: residues 46–56 and 63–72; these read STAAGGVTPGA and GAIPASSSSG. The span at 84-101 shows a compositional bias: polar residues; that stretch reads SNNNRPAVTNRSSETKLM. Positions 102-128 are enriched in low complexity; the sequence is TPTGSSSSPSQSPSQTQASIQTQTSQQ. GAF domains follow at residues 247–399 and 431–612; these read DIDV…GIGI and NLEC…GLGI. The PDEase domain occupies 642–965; it reads SQDQTEKLTQ…RNWQDLAEKV (324 aa). The Proton donor role is filled by histidine 718. A divalent metal cation-binding residues include histidine 722, histidine 758, aspartate 759, and aspartate 869. Disordered regions lie at residues 1006–1035 and 1065–1118; these read QQSQ…TGAL and SHVS…CALL. Basic and acidic residues-rich tracts occupy residues 1011–1022 and 1065–1075; these read GSEDSHTPEHQR and SHVSEDMDDKS. Residues 1084–1104 are compositionally biased toward low complexity; that stretch reads ASGSMGRMSASSSTSSAGGQM. Basic residues predominate over residues 1108-1118; that stretch reads SKKRSKLCALL. At cysteine 1115 the chain carries Cysteine methyl ester. Cysteine 1115 is lipidated: S-farnesyl cysteine. A propeptide spans 1116 to 1118 (removed in mature form); sequence ALL.

The protein belongs to the cyclic nucleotide phosphodiesterase family. As to quaternary structure, interacts with PrBP. A divalent metal cation serves as cofactor. In terms of tissue distribution, expressed in Malpighian tubule principal cells. Also expressed in adult head.

The protein resides in the cell membrane. It catalyses the reaction 3',5'-cyclic GMP + H2O = GMP + H(+). Inhibited by sildenafil and zaprinast. Hydrolyzes the second messenger cGMP, which is a key regulator of many important physiological processes. Has cAMP phosphodiesterase activity in vitro but not in vivo. Has a role regulating cGMP transport in Malpighian tubule principal cells. The chain is cGMP-specific 3',5'-cyclic phosphodiesterase (Pde6) from Drosophila melanogaster (Fruit fly).